Reading from the N-terminus, the 221-residue chain is Putative NAD(P)H nitroreductase YfkO (221 aa).

FMN-binding positions include 15–17 (RHA) and 73–75 (QKQ). 157–162 (AAAQIG) is a binding site for NAD(+). Residues 169 to 170 (EG) and R211 contribute to the FMN site.

Belongs to the nitroreductase family. As to quaternary structure, monomer. Requires FMN as cofactor.

The polypeptide is Putative NAD(P)H nitroreductase YfkO (yfkO) (Bacillus subtilis (strain 168)).